A 340-amino-acid chain; its full sequence is Protein-arginine kinase (340 aa).

The Phosphagen kinase C-terminal domain maps to 21–242; sequence VVLSSRIRLA…EQIIMQERVA (222 aa). ATP-binding positions include 24-28, H79, R113, 164-168, and 195-200; these read SSRIR, RASVM, and RGIYGE.

This sequence belongs to the ATP:guanido phosphotransferase family.

The enzyme catalyses L-arginyl-[protein] + ATP = N(omega)-phospho-L-arginyl-[protein] + ADP + H(+). In terms of biological role, catalyzes the specific phosphorylation of arginine residues in proteins. This chain is Protein-arginine kinase, found in Listeria monocytogenes serotype 4b (strain F2365).